We begin with the raw amino-acid sequence, 406 residues long: Olfactomedin-like protein 3 (406 aa).

The N-terminal stretch at 1 to 21 is a signal peptide; that stretch reads MGPHTQLLILLLLSWLGPLQG. The stretch at 22–101 forms a coiled coil; that stretch reads QQHHLVEYME…REVDYLETQN (80 aa). Residues 134–401 enclose the Olfactomedin-like domain; it reads DCGYTISQVR…QIVYKLEMRK (268 aa). An intrachain disulfide couples C135 to C328. An N-linked (GlcNAc...) asparagine glycan is attached at N248.

The protein belongs to the OLFML3 family.

The protein localises to the secreted. In terms of biological role, secreted scaffold protein that plays an essential role in dorsoventral patterning during early development. Stabilizes axial formation by restricting chordin (CHRD) activity on the dorsal side. Acts by facilitating the association between the tolloid proteases and their substrate chordin (CHRD), leading to enhance chordin (CHRD) degradation. May have matrix-related function involved in placental and embryonic development, or play a similar role in other physiological processes. The protein is Olfactomedin-like protein 3 (OLFML3) of Bos taurus (Bovine).